Consider the following 339-residue polypeptide: Phenylalanine--tRNA ligase alpha subunit (339 aa).

Glutamate 254 serves as a coordination point for Mg(2+).

The protein belongs to the class-II aminoacyl-tRNA synthetase family. Phe-tRNA synthetase alpha subunit type 1 subfamily. In terms of assembly, tetramer of two alpha and two beta subunits. Mg(2+) is required as a cofactor.

Its subcellular location is the cytoplasm. It carries out the reaction tRNA(Phe) + L-phenylalanine + ATP = L-phenylalanyl-tRNA(Phe) + AMP + diphosphate + H(+). The sequence is that of Phenylalanine--tRNA ligase alpha subunit from Clostridium perfringens (strain ATCC 13124 / DSM 756 / JCM 1290 / NCIMB 6125 / NCTC 8237 / Type A).